The primary structure comprises 203 residues: Coupling of ubiquitin conjugation to ER degradation protein 1 (203 aa).

Topologically, residues 1–6 are lumenal; the sequence is MEDSRL. Residues 7-23 traverse the membrane as a helical segment; the sequence is LITLILVFGVIFLKKFF. The Cytoplasmic portion of the chain corresponds to 24–203; sequence QSNQHPSAQR…SDKDLQSLLT (180 aa). Residues 36 to 61 are disordered; the sequence is ATGVNAHGRPQGSTQNALRRTGRVNG. Residues 65–107 form the CUE domain; that stretch reads VTTQMVETVQNLAPNLHPEQIRYSLENTGSVEETVERYLRGDE.

The protein belongs to the CUE1 family. In terms of assembly, forms a heterodimer with UBC7. Interacts with SSM4/DOA10 and UBX2/SEL1.

It localises to the endoplasmic reticulum membrane. Its function is as follows. Component of the endoplasmic reticulum-associated protein degradation (ERAD) pathway. Recruits the soluble ubiquitin-conjugating enzyme UBC7 to the cytoplasmic face of the endoplasmic reticulum membrane where it functions in degradation of misfolded or regulated proteins localized in the endoplasmic reticulum (ER) lumen or membrane via the ubiquitin-proteasome system. Targets the E2 conjugating enzyme UBC7 to the DOA10 ubiquitin ligase complex, which is part of the ERAD-C pathway responsible for the rapid degradation of membrane proteins with misfolded cytoplasmic domains, and to the HRD1 ubiquitin ligase complex, which is part of the ERAD-L and ERAD-M pathways responsible for the rapid degradation of soluble lumenal and membrane proteins with misfolded lumenal domains (ERAD-L), or ER-membrane proteins with misfolded transmembrane domains (ERAD-M). Also has a role in cold adaptation, perhaps through effects on sterol biosynthesis. The protein is Coupling of ubiquitin conjugation to ER degradation protein 1 (CUE1) of Saccharomyces cerevisiae (strain ATCC 204508 / S288c) (Baker's yeast).